A 74-amino-acid polypeptide reads, in one-letter code: Large ribosomal subunit protein uL29 (74 aa).

The protein belongs to the universal ribosomal protein uL29 family.

This Streptomyces avermitilis (strain ATCC 31267 / DSM 46492 / JCM 5070 / NBRC 14893 / NCIMB 12804 / NRRL 8165 / MA-4680) protein is Large ribosomal subunit protein uL29.